Here is a 304-residue protein sequence, read N- to C-terminus: Glutaminase (304 aa).

Positions 63, 113, 157, 164, 188, 240, and 258 each coordinate substrate.

Belongs to the glutaminase family. Homotetramer.

It catalyses the reaction L-glutamine + H2O = L-glutamate + NH4(+). This is Glutaminase from Paraburkholderia phytofirmans (strain DSM 17436 / LMG 22146 / PsJN) (Burkholderia phytofirmans).